Consider the following 326-residue polypeptide: MPGPTQTLSPNGENNNDIIQDNGTIIPFRKHTVRGERSYSWGMAVNVYSTSITQETMSRHDIIAWVNDIVSLNYTKVEQLCSGAAYCQFMDMLFPGCISLKKVKFQAKLEHEYIHNFKLLQASFKRMNVDKVIPVEKLVKGRFQDNLDFIQWFKKFYDANYDGKEYDPVEARQGQDAIPPPDPGEQIFNLPKKSHHANSPTAGAAKSSPASKPGSTPSRPSSAKRASSSGSASRSDKDLETQVIQLNEQVHSLKLALEGVEKERDFYFGKLREIELLCQEHGQENDDLVQRLMEVLYASDEQEGQTEEPEAEEQAHDQQPQQQEEY.

Position 9 is a phosphoserine (S9). The region spanning 56-158 (TMSRHDIIAW…FIQWFKKFYD (103 aa)) is the Calponin-homology (CH) domain. A Phosphotyrosine modification is found at Y166. Disordered stretches follow at residues 170 to 239 (EARQ…DKDL) and 297 to 326 (YASD…QEEY). The DCTN1-binding stretch occupies residues 186 to 326 (QIFNLPKKSH…DQQPQQQEEY (141 aa)). The span at 199 to 233 (SPTAGAAKSSPASKPGSTPSRPSSAKRASSSGSAS) shows a compositional bias: low complexity. Phosphoserine occurs at positions 218 and 235. Residues 235–305 (SDKDLETQVI…LYASDEQEGQ (71 aa)) enclose the EB1 C-terminal domain. Residues 258 to 301 (EGVEKERDFYFGKLREIELLCQEHGQENDDLVQRLMEVLYASDE) form an APC-binding region. The span at 300-312 (DEQEGQTEEPEAE) shows a compositional bias: acidic residues. Residues 317-326 (DQQPQQQEEY) are compositionally biased toward low complexity.

Belongs to the MAPRE family. As to quaternary structure, interacts with DCTN1. Interacts with APC (via C-terminal). Interacts with monomeric and polymerized tubulin. Interacts with SLAIN1. Interacts (via the N-terminal region) with BAG1. Interacts with ASB14. Post-translationally, ubiquitinated in an ASB14-dependent manner; leading to proteasomal degradation. Phosphorylated at Ser-235 by CK2 leading to enhanced cell adhesion. Phosphorylated by CDK1 and AURKB during mitosis reduces the binding affinity of MAPRE2 for microtubules. In terms of tissue distribution, expressed during early stages of apico-basal epithelial differentiation but down-regulated in most cells at later stages.

The protein localises to the cytoplasm. Its subcellular location is the cytoskeleton. It is found in the spindle. Adapter protein that is involved in microtubule polymerization, and spindle function by stabilizing microtubules and anchoring them at centrosomes. Therefore, ensures mitotic progression and genome stability. Acts as a central regulator of microtubule reorganization in apico-basal epithelial differentiation. Plays a role during oocyte meiosis by regulating microtubule dynamics. Participates in neurite growth by interacting with plexin B3/PLXNB3 and microtubule reorganization during apico-basal epithelial differentiation. Plays also an essential role for cell migration and focal adhesion dynamics. Mechanistically, recruits HAX1 to microtubules in order to regulate focal adhesion dynamics. The protein is Microtubule-associated protein RP/EB family member 2 (Mapre2) of Mus musculus (Mouse).